Here is a 502-residue protein sequence, read N- to C-terminus: Smr domain-containing protein C1235.03 (502 aa).

The interval leucine 150–glutamate 184 is disordered. Residues histidine 157–asparagine 171 are compositionally biased toward basic residues. Residues serine 411–isoleucine 459 enclose the Smr domain.

Its subcellular location is the nucleus. The protein resides in the nucleolus. This is Smr domain-containing protein C1235.03 from Schizosaccharomyces pombe (strain 972 / ATCC 24843) (Fission yeast).